The chain runs to 518 residues: Receptor-interacting serine/threonine-protein kinase 3 (518 aa).

Position 2 is a phosphoserine (serine 2). Positions 21 to 287 (LENQELVGKG…ECLPKTDEVF (267 aa)) constitute a Protein kinase domain. Residue 27 to 35 (VGKGGFGTV) participates in ATP binding. Lysine 42 is covalently cross-linked (Glycyl lysine isopeptide (Lys-Gly) (interchain with G-Cter in ubiquitin)). Lysine 50 serves as a coordination point for ATP. The Proton acceptor role is filled by aspartate 142. Serine 164 carries the phosphoserine modification. Residue threonine 182 is modified to Phosphothreonine. Phosphoserine; by autocatalysis occurs at positions 199 and 227. Threonine 252 is subject to Phosphothreonine. A Phosphoserine modification is found at serine 299. Threonine 333 bears the Phosphothreonine mark. Residues lysine 351 and lysine 363 each participate in a glycyl lysine isopeptide (Lys-Gly) (interchain with G-Cter in ubiquitin) cross-link. The tract at residues 355-443 (EEPPSSVPKK…WSCRTPEPNP (89 aa)) is disordered. The segment covering 384–408 (TAGTSSDSMAQPPQTPETSTFRNQM) has biased composition (polar residues). Residue serine 389 is modified to Phosphoserine. A Phosphothreonine modification is found at threonine 401. The RIP homotypic interaction motif (RHIM) signature appears at 450 to 466 (VNIYNCSGVQVGDNNYL). A disordered region spans residues 476-518 (TWGLAPSGKGRGLQHPPPVGSQEGPKDPEAWSRPQGWYNHSGK). Lysine 518 is covalently cross-linked (Glycyl lysine isopeptide (Lys-Gly) (interchain with G-Cter in ubiquitin)).

It belongs to the protein kinase superfamily. TKL Ser/Thr protein kinase family. As to quaternary structure, interacts (via RIP homotypic interaction motif) with RIPK1 (via RIP homotypic interaction motif); this interaction induces RIPK1 phosphorylation and formation of a RIPK1-RIPK3 necrosis-inducing complex. Interacts with MLKL; the interaction is direct and triggers necroptosis. Interacts with ZBP1 (via RIP homotypic interaction motif); interaction with ZBP1 activates RIPK3, triggering necroptosis. Upon TNF-induced necrosis, the RIPK1-RIPK3 dimer further interacts with PGAM5 and MLKL; the formation of this complex leads to PGAM5 phosphorylation and increase in PGAM5 phosphatase activity. Binds TRAF2 and is recruited to the TNFR-1 signaling complex. Interacts with PYGL, GLUL and GLUD1; these interactions result in activation of these metabolic enzymes. Interacts with BIRC2/c-IAP1, BIRC3/c-IAP2 and XIAP/BIRC4. Interacts with ARHGEF2. Interacts with PELI1 (via atypical FHA domain); the phosphorylated form at Thr-182 binds preferentially to PELI1. Interacts with BUB1B, TRAF2 and STUB1. Interacts with CASP6. Component of the AIM2 PANoptosome complex, a multiprotein complex that drives inflammatory cell death (PANoptosis). In terms of assembly, (Microbial infection) Interacts (via RIP homotypic interaction motif/RHIM) with herpes simplex virus 1/HHV-1 protein RIR1/ICP6 (via RHIM); this interaction may induce heteromeric amyloid assemblies and prevent necroptosis activation. (Microbial infection) Interacts (via RIP homotypic interaction motif/RHIM) with herpes simplex virus 2/HHV-2 protein RIR1/ICP10 (via RHIM); this interaction prevents necroptosis activation. Post-translationally, (Microbial infection) Proteolytically cleaved by S.flexneri OspD3 within the RIP homotypic interaction motif (RHIM), leading to its degradation and inhibition of necroptosis. RIPK1 and RIPK3 undergo reciprocal auto- and trans-phosphorylation. Autophosphorylated following interaction with ZBP1. Phosphorylation of Ser-199 plays a role in the necroptotic function of RIPK3. Autophosphorylates at Ser-227 following activation by ZBP1: phosphorylation at these sites is a hallmark of necroptosis and is required for binding MLKL. Phosphorylation at Thr-182 is important for its kinase activity, interaction with PELI1 and PELI1-mediated 'Lys-48'-linked polyubiquitination and for its ability to mediate TNF-induced necroptosis. In terms of processing, polyubiquitinated with 'Lys-48' and 'Lys-63'-linked chains by BIRC2/c-IAP1 and BIRC3/c-IAP2, leading to activation of NF-kappa-B. Polyubiquitinated with 'Lys-48'-linked chains by PELI1 leading to its subsequent proteasome-dependent degradation. Ubiquitinated by STUB1 leading to its subsequent proteasome-dependent degradation. Deubiquitinated by USP22. In terms of tissue distribution, highly expressed in the pancreas. Detected at lower levels in heart, placenta, lung and kidney. Expression is significantly increased in colon and lung cancers.

The protein localises to the cytoplasm. The protein resides in the cytosol. It localises to the nucleus. The catalysed reaction is L-seryl-[protein] + ATP = O-phospho-L-seryl-[protein] + ADP + H(+). The enzyme catalyses L-threonyl-[protein] + ATP = O-phospho-L-threonyl-[protein] + ADP + H(+). Activity is stimulated by ZBP1, which senses double-stranded Z-RNA structures. RIPK3-dependent necroptosis is inhibited by RIPK1: RIPK1 prevents the ZBP1-induced activation of RIPK3 via FADD-mediated recruitment of CASP8, which cleaves RIPK1 and limits TNF-induced necroptosis. Its function is as follows. Serine/threonine-protein kinase that activates necroptosis and apoptosis, two parallel forms of cell death. Necroptosis, a programmed cell death process in response to death-inducing TNF-alpha family members, is triggered by RIPK3 following activation by ZBP1. Activated RIPK3 forms a necrosis-inducing complex and mediates phosphorylation of MLKL, promoting MLKL localization to the plasma membrane and execution of programmed necrosis characterized by calcium influx and plasma membrane damage. In addition to TNF-induced necroptosis, necroptosis can also take place in the nucleus in response to orthomyxoviruses infection: following ZBP1 activation, which senses double-stranded Z-RNA structures, nuclear RIPK3 catalyzes phosphorylation and activation of MLKL, promoting disruption of the nuclear envelope and leakage of cellular DNA into the cytosol. Also regulates apoptosis: apoptosis depends on RIPK1, FADD and CASP8, and is independent of MLKL and RIPK3 kinase activity. Phosphorylates RIPK1: RIPK1 and RIPK3 undergo reciprocal auto- and trans-phosphorylation. In some cell types, also able to restrict viral replication by promoting cell death-independent responses. In response to Zika virus infection in neurons, promotes a cell death-independent pathway that restricts viral replication: together with ZBP1, promotes a death-independent transcriptional program that modifies the cellular metabolism via up-regulation expression of the enzyme ACOD1/IRG1 and production of the metabolite itaconate. Itaconate inhibits the activity of succinate dehydrogenase, generating a metabolic state in neurons that suppresses replication of viral genomes. RIPK3 binds to and enhances the activity of three metabolic enzymes: GLUL, GLUD1, and PYGL. These metabolic enzymes may eventually stimulate the tricarboxylic acid cycle and oxidative phosphorylation, which could result in enhanced ROS production. (Microbial infection) In case of herpes simplex virus 1/HHV-1 infection, forms heteromeric amyloid structures with HHV-1 protein RIR1/ICP6 which may inhibit RIPK3-mediated necroptosis, thereby preventing host cell death pathway and allowing viral evasion. The protein is Receptor-interacting serine/threonine-protein kinase 3 of Homo sapiens (Human).